The sequence spans 118 residues: UPF0102 protein Arth_2474 (118 aa).

It belongs to the UPF0102 family.

This chain is UPF0102 protein Arth_2474, found in Arthrobacter sp. (strain FB24).